Consider the following 464-residue polypeptide: Citrate synthase 5, mitochondrial (464 aa).

The transit peptide at 1-25 directs the protein to the mitochondrion; sequence MVFFRSVSAISRLRSRAVQQSSLSN. Residues H300, H346, and D401 contribute to the active site.

The protein belongs to the citrate synthase family.

Its subcellular location is the mitochondrion matrix. The catalysed reaction is oxaloacetate + acetyl-CoA + H2O = citrate + CoA + H(+). It participates in carbohydrate metabolism; tricarboxylic acid cycle; isocitrate from oxaloacetate: step 1/2. The protein is Citrate synthase 5, mitochondrial (CSY5) of Arabidopsis thaliana (Mouse-ear cress).